Consider the following 397-residue polypeptide: Chorismate synthase (397 aa).

2 residues coordinate NADP(+): R40 and R46. Residues 129-131 (RAS), 257-258 (QA), G302, 317-321 (KPIAT), and R343 contribute to the FMN site.

Belongs to the chorismate synthase family. As to quaternary structure, homotetramer. The cofactor is FMNH2.

The enzyme catalyses 5-O-(1-carboxyvinyl)-3-phosphoshikimate = chorismate + phosphate. Its pathway is metabolic intermediate biosynthesis; chorismate biosynthesis; chorismate from D-erythrose 4-phosphate and phosphoenolpyruvate: step 7/7. Functionally, catalyzes the anti-1,4-elimination of the C-3 phosphate and the C-6 proR hydrogen from 5-enolpyruvylshikimate-3-phosphate (EPSP) to yield chorismate, which is the branch point compound that serves as the starting substrate for the three terminal pathways of aromatic amino acid biosynthesis. This reaction introduces a second double bond into the aromatic ring system. The protein is Chorismate synthase of Chlorobium phaeobacteroides (strain BS1).